We begin with the raw amino-acid sequence, 341 residues long: Retinol dehydrogenase 10 (341 aa).

Residues 3–23 traverse the membrane as a helical; Signal-anchor segment; it reads IVVEFFVVTFKVLWAFVLAAA. 40–64 provides a ligand contact to NADP(+); the sequence is LITGAGSGLGRLFALEFARRRALLV. Ser-197 is a substrate binding site. The active-site Proton acceptor is Tyr-210.

It belongs to the short-chain dehydrogenases/reductases (SDR) family. As to expression, detected in retinal pigment epithelium (at protein level). Detected in retina, retinal pigment epithelium, and at lower levels in cornea, liver, kidney, pancreas, lung, brain and skeletal muscle.

It localises to the microsome membrane. The protein resides in the endoplasmic reticulum membrane. It carries out the reaction all-trans-retinol + NADP(+) = all-trans-retinal + NADPH + H(+). It participates in cofactor metabolism; retinol metabolism. In terms of biological role, retinol dehydrogenase with a clear preference for NADP. Converts all-trans-retinol to all-trans-retinal. Has no detectable activity towards 11-cis-retinol, 9-cis-retinol and 13-cis-retinol. The protein is Retinol dehydrogenase 10 (RDH10) of Bos taurus (Bovine).